We begin with the raw amino-acid sequence, 177 residues long: Voltage-dependent L-type calcium channel subunit alpha-1C (177 aa).

Residues 27–45 form a helical membrane-spanning segment; the sequence is ITFFRLFRVMRLVKLLSRG. Residues 64–84 traverse the membrane as a helical segment; it reads YVALLIVMLFFIYAVIGMQVF. N-linked (GlcNAc...) asparagine glycosylation is present at asparagine 90. The segment at residues 107–125 is an intramembrane region (pore-forming); that stretch reads AVLLLFRCATGEAWQEIML. The short motif at 116-119 is the Selectivity filter of repeat IV element; the sequence is TGEA. An intrachain disulfide couples cysteine 133 to cysteine 149. The N-linked (GlcNAc...) asparagine glycan is linked to asparagine 141. Residues 154–177 traverse the membrane as a helical segment; the sequence is AVFYFISFYMLCAFLIIDLFVAVI.

The protein belongs to the calcium channel alpha-1 subunit (TC 1.A.1.11) family. CACNA1C subfamily. As to quaternary structure, component of a calcium channel complex consisting of a pore-forming alpha subunit (CACNA1C) and ancillary beta, gamma and delta subunits. The channel complex contains alpha, beta, gamma and delta subunits in a 1:1:1:1 ratio, i.e. it contains only one of each type of subunit. CACNA1C channel activity is modulated by ancillary subunits, such as CACNB2, CACNB3, CACNA2D1 and CACNA2D4. In terms of processing, phosphorylation by PKA activates the channel.

It localises to the cell membrane. Its subcellular location is the perikaryon. The protein localises to the postsynaptic density membrane. The protein resides in the cell projection. It is found in the dendrite. It localises to the sarcolemma. Its subcellular location is the T-tubule. It carries out the reaction Ca(2+)(in) = Ca(2+)(out). Its activity is regulated as follows. Inhibited by dihydropyridines (DHP), such as isradipine. Channel activity is regulated by Ca(2+) and calmodulin. Functionally, pore-forming, alpha-1C subunit of the voltage-gated calcium channel that gives rise to L-type calcium currents. Mediates influx of calcium ions into the cytoplasm, and thereby triggers calcium release from the sarcoplasm. Plays an important role in excitation-contraction coupling in the heart. Required for normal heart development and normal regulation of heart rhythm. Required for normal contraction of smooth muscle cells in blood vessels and in the intestine. Essential for normal blood pressure regulation via its role in the contraction of arterial smooth muscle cells. Long-lasting (L-type) calcium channels belong to the 'high-voltage activated' (HVA) group. This is Voltage-dependent L-type calcium channel subunit alpha-1C (CACNA1C) from Gallus gallus (Chicken).